Here is a 473-residue protein sequence, read N- to C-terminus: Vasculin-like protein 1 (473 aa).

Polar residues predominate over residues Ser14–Thr25. Residues Ser14–Asn55 are disordered. A compositionally biased stretch (basic and acidic residues) spans Phe26 to Gly38. Phosphoserine occurs at positions 49 and 76. Disordered regions lie at residues Gly88–Cys127 and Asp155–Pro189. Polar residues predominate over residues Ser103 to Gly112. Over residues Asn113 to Lys125 the composition is skewed to basic residues. At Ser199 the chain carries Phosphoserine. Disordered regions lie at residues Leu235–Ser267 and Leu281–Thr316. Ser289 is modified (phosphoserine). The span at Glu292–Thr309 shows a compositional bias: low complexity. Thr298 carries the phosphothreonine modification. Position 381 is a phosphoserine (Ser381). Positions Glu453–Lys473 are disordered.

Belongs to the vasculin family.

It is found in the nucleus. Functionally, possible transcription factor. This chain is Vasculin-like protein 1 (Gpbp1l1), found in Mus musculus (Mouse).